Here is a 112-residue protein sequence, read N- to C-terminus: cAMP-regulated phosphoprotein 19 (112 aa).

M1 carries the N-acetylmethionine modification. Residues 1–11 (MSAEVPEAASA) are compositionally biased toward low complexity. Residues 1 to 49 (MSAEVPEAASAEEQKEMEDKVTSPEKAEEAKLKARYPHLGQKPGGSDFL) are disordered. At S2 the chain carries N-acetylserine. Phosphoserine is present on residues S2 and S23. The span at 12 to 32 (EEQKEMEDKVTSPEKAEEAKL) shows a compositional bias: basic and acidic residues. Phosphoserine; by GWL occurs at positions 62 and 104. Residues 72 to 112 (MKNKQLPTATPDKTEVTGDHIPTPQDLPQRKPSLVASKLAG) are disordered. The residue at position 104 (S104) is a Phosphoserine; by PKA. The residue at position 109 (K109) is an N6-acetyllysine.

Interacts (when phosphorylated at Ser-62) with PPP2R2D. Interacts with SNCA. Interacts with PPP2R2A; the interaction is direct and this interaction inhibits PP2A activity. In terms of processing, phosphorylation at Ser-62 by MASTL/GWL during mitosis is essential for interaction with PPP2R2D (PR55-delta) and subsequent inactivation of PP2A. Phosphorylated by PKA. As to expression, isoform ARPP-19 is found in all brain regions and also present in non-neuronal tissues. Isoform ARPP-16 is enriched in the caudate nucleus, found in low levels in cerebral cortex.

The protein localises to the cytoplasm. Protein phosphatase inhibitor that specifically inhibits protein phosphatase 2A (PP2A) during mitosis. Inhibition of PP2A is enhanced when ARPP19 is phosphorylated. When phosphorylated at Ser-62 during mitosis, specifically interacts with PPP2R2D (PR55-delta) and inhibits its activity, leading to inactivation of PP2A, an essential condition to keep cyclin-B1-CDK1 activity high during M phase. May indirectly enhance GAP-43 expression. This chain is cAMP-regulated phosphoprotein 19 (ARPP19), found in Bos taurus (Bovine).